The sequence spans 181 residues: Probable calcium-binding protein CML43 (181 aa).

EF-hand domains follow at residues 24–59 (LNAL…LGLD), 107–142 (SPES…LGLP), and 145–180 (GEIE…VVVP). Positions 37, 39, 41, 48, 120, 122, 124, 131, 158, 160, 162, 164, and 169 each coordinate Ca(2+).

In terms of tissue distribution, expressed specifically in roots.

Calcium-binding protein that may mediate calcium-dependent signal during plant defense response. The chain is Probable calcium-binding protein CML43 (CML43) from Arabidopsis thaliana (Mouse-ear cress).